The following is a 355-amino-acid chain: Uroporphyrinogen decarboxylase (355 aa).

Residues 27 to 31, Asp-77, Tyr-154, Thr-209, and His-327 contribute to the substrate site; that span reads RQAGR.

Belongs to the uroporphyrinogen decarboxylase family. In terms of assembly, homodimer.

It localises to the cytoplasm. The enzyme catalyses uroporphyrinogen III + 4 H(+) = coproporphyrinogen III + 4 CO2. It functions in the pathway porphyrin-containing compound metabolism; protoporphyrin-IX biosynthesis; coproporphyrinogen-III from 5-aminolevulinate: step 4/4. Its function is as follows. Catalyzes the decarboxylation of four acetate groups of uroporphyrinogen-III to yield coproporphyrinogen-III. The sequence is that of Uroporphyrinogen decarboxylase from Pseudoalteromonas atlantica (strain T6c / ATCC BAA-1087).